The following is a 448-amino-acid chain: Gamma conglutin 2 (448 aa).

The N-terminal stretch at 1 to 33 (MAKNMAQIFPFIAVFLSCSFIFVLSSSQNSQSL) is a signal peptide. The region spanning 63-428 (HWANIHKRTP…DLERSRVEFN (366 aa)) is the Peptidase A1 domain. Cystine bridges form between cysteine 91-cysteine 181, cysteine 105-cysteine 118, cysteine 110-cysteine 136, cysteine 121-cysteine 131, and cysteine 349-cysteine 390. An N-linked (GlcNAc...) asparagine glycan is attached at asparagine 133.

This sequence belongs to the peptidase A1 family. As to quaternary structure, two-subunit monomeric unit made of alpha and beta subunits coupled by disulfide bonds (at pH 4.5 and under non-reducing conditions). Can also form oligomers including dimer, tetramer and cyclic hexamer (trimer of dimers) (at pH &gt; 5.5). Component of globulins complexes which accumulate in seeds. Interacts with flavonoids (e.g. apigenin glucosides) present in globulins complexes. In terms of processing, glycosylated on alpha chain. Expressed in developing seeds and in the young roots and cotyledons of germinating seeds and young seedlings.

It is found in the secreted. The protein localises to the extracellular space. In terms of biological role, sulfur-rich seed storage protein that remains undegraded at germination. This is Gamma conglutin 2 from Lupinus albus (White lupine).